Consider the following 363-residue polypeptide: MSHEVPNAIDVRNAVKRYGDFTALKTISLSIRDNEFFTLLGPSGCGKTTLLRMIAGFEDVTEGEIFLYGEEIEDLPPNRRPVNTVFQNYALFPHMDVMENVGFGLEMLGKPKAQARARAGEILELVQLSQFANRKPSQLSGGQQQRVALARALAPQPKVLLLDEPLSALDLKLRKAMQLELKHLQRETGITFIFVTHDQDEALTMSDRIAVMSAGELQQLGDARDIYEKPANRFVADFIGETNLFEVTIKSRDGTRVLCAFLNGLTLTCDAVAGMDVGDRVHMSIRPERIKLRSSKVETENFQAQVVENIYAGTDVQTIVHLQGGMPLAVRTQNSEIGRSMTFEPGAEVFVDVEFGSARLLAN.

The 231-residue stretch at 9–239 (IDVRNAVKRY…PANRFVADFI (231 aa)) folds into the ABC transporter domain. 41-48 (GPSGCGKT) contacts ATP.

It belongs to the ABC transporter superfamily. Spermidine/putrescine importer (TC 3.A.1.11.1) family. As to quaternary structure, the complex is composed of two ATP-binding proteins (PotA), two transmembrane proteins (PotB and PotC) and a solute-binding protein (PotD).

The protein localises to the cell inner membrane. The enzyme catalyses ATP + H2O + polyamine-[polyamine-binding protein]Side 1 = ADP + phosphate + polyamineSide 2 + [polyamine-binding protein]Side 1.. Functionally, part of the ABC transporter complex PotABCD involved in spermidine/putrescine import. Responsible for energy coupling to the transport system. The sequence is that of Spermidine/putrescine import ATP-binding protein PotA from Roseobacter denitrificans (strain ATCC 33942 / OCh 114) (Erythrobacter sp. (strain OCh 114)).